Here is a 318-residue protein sequence, read N- to C-terminus: Methionine import ATP-binding protein MetN (318 aa).

The ABC transporter domain maps to 2 to 237; it reads IEIKDVGKIF…PEGELKKIIE (236 aa). 34-41 provides a ligand contact to ATP; the sequence is GRSGAGKS.

Belongs to the ABC transporter superfamily. Methionine importer (TC 3.A.1.24) family. The complex is composed of two ATP-binding proteins (MetN), two transmembrane proteins (MetI) and a solute-binding protein (MetQ).

It is found in the cell membrane. It catalyses the reaction L-methionine(out) + ATP + H2O = L-methionine(in) + ADP + phosphate + H(+). The catalysed reaction is D-methionine(out) + ATP + H2O = D-methionine(in) + ADP + phosphate + H(+). Its function is as follows. Part of the ABC transporter complex MetNIQ involved in methionine import. Responsible for energy coupling to the transport system. In Clostridium tetani (strain Massachusetts / E88), this protein is Methionine import ATP-binding protein MetN.